The following is a 282-amino-acid chain: Bifunctional protein FolD (282 aa).

NADP(+)-binding positions include 164–166 (GAS), Ile189, and Ile230.

This sequence belongs to the tetrahydrofolate dehydrogenase/cyclohydrolase family. Homodimer.

It catalyses the reaction (6R)-5,10-methylene-5,6,7,8-tetrahydrofolate + NADP(+) = (6R)-5,10-methenyltetrahydrofolate + NADPH. It carries out the reaction (6R)-5,10-methenyltetrahydrofolate + H2O = (6R)-10-formyltetrahydrofolate + H(+). Its pathway is one-carbon metabolism; tetrahydrofolate interconversion. Functionally, catalyzes the oxidation of 5,10-methylenetetrahydrofolate to 5,10-methenyltetrahydrofolate and then the hydrolysis of 5,10-methenyltetrahydrofolate to 10-formyltetrahydrofolate. The polypeptide is Bifunctional protein FolD (Campylobacter jejuni subsp. jejuni serotype O:2 (strain ATCC 700819 / NCTC 11168)).